Here is a 356-residue protein sequence, read N- to C-terminus: Arginine kinase 1 (356 aa).

The Phosphagen kinase N-terminal domain maps to 6–91 (VLAKLEEGYA…FDPIIEDYHG (86 aa)). Position 64-68 (64-68 (GVGIY)) interacts with substrate. A Phosphagen kinase C-terminal domain is found at 119–356 (YVISTRVRCG…TELIKLEKSL (238 aa)). ATP contacts are provided by residues 122 to 126 (STRVR) and His185. Residue Glu225 participates in substrate binding. Arg229 provides a ligand contact to ATP. Cys271 lines the substrate pocket. ATP contacts are provided by residues 280 to 284 (RASVH) and 309 to 314 (RGTRGE). Position 314 (Glu314) interacts with substrate.

It belongs to the ATP:guanido phosphotransferase family.

The enzyme catalyses L-arginine + ATP = N(omega)-phospho-L-arginine + ADP + H(+). This chain is Arginine kinase 1, found in Drosophila melanogaster (Fruit fly).